Here is a 134-residue protein sequence, read N- to C-terminus: UPF0412 protein YaaI (134 aa).

A signal peptide spans 1–23 (MKSVITISASLAISLMLCCTAQA).

It belongs to the UPF0412 family.

In Escherichia coli O127:H6 (strain E2348/69 / EPEC), this protein is UPF0412 protein YaaI.